The primary structure comprises 185 residues: Lysozyme g (185 aa).

2 disulfide bridges follow: Cys4-Cys60 and Cys18-Cys29. Glu73 is an active-site residue.

This sequence belongs to the glycosyl hydrolase 23 family.

The protein resides in the secreted. The enzyme catalyses Hydrolysis of (1-&gt;4)-beta-linkages between N-acetylmuramic acid and N-acetyl-D-glucosamine residues in a peptidoglycan and between N-acetyl-D-glucosamine residues in chitodextrins.. The polypeptide is Lysozyme g (Cygnus atratus (Black swan)).